Consider the following 211-residue polypeptide: tRNA (guanine-N(7)-)-methyltransferase (211 aa).

4 residues coordinate S-adenosyl-L-methionine: glutamate 44, aspartate 69, aspartate 96, and aspartate 118. The active site involves aspartate 118. Residue lysine 122 participates in substrate binding. The interval 124-129 (RHEKRR) is interaction with RNA. Substrate is bound by residues aspartate 154 and 191–194 (TEYE).

The protein belongs to the class I-like SAM-binding methyltransferase superfamily. TrmB family.

It carries out the reaction guanosine(46) in tRNA + S-adenosyl-L-methionine = N(7)-methylguanosine(46) in tRNA + S-adenosyl-L-homocysteine. The protein operates within tRNA modification; N(7)-methylguanine-tRNA biosynthesis. In terms of biological role, catalyzes the formation of N(7)-methylguanine at position 46 (m7G46) in tRNA. The polypeptide is tRNA (guanine-N(7)-)-methyltransferase (Streptococcus equi subsp. zooepidemicus (strain H70)).